Reading from the N-terminus, the 127-residue chain is Protein SPIRAL1-like 4 (127 aa).

The disordered stretch occupies residues 1–127 (MGKARGVNSG…FGSGPCGSDK (127 aa)). Residues 39–48 (TTTTTTTTTT) show a composition bias toward low complexity. At serine 80 the chain carries Phosphoserine. Residues 80–94 (SPNNYYRSDGQNCGN) show a composition bias toward polar residues.

The protein belongs to the SPIRAL1 family. As to expression, ubiquitous.

Acts redundantly with SPR1 in maintaining the cortical microtubules organization essential for anisotropic cell growth. The polypeptide is Protein SPIRAL1-like 4 (SP1L4) (Arabidopsis thaliana (Mouse-ear cress)).